The chain runs to 373 residues: WAT1-related protein At4g08300 (373 aa).

10 helical membrane-spanning segments follow: residues 11 to 31 (PIIAIISLQFGYAGMYIITMV), 41 to 61 (ILATYRHVVATIVIAPFALIL), 67 to 87 (PKMTWPLFLRILALGFLEPLL), 102 to 122 (TYSSAFVNALPAITFIMAVIF), 139 to 159 (IGTAITVGGAMVMTLYKGPAI), 185 to 205 (WVTGTLAVMGSITTWAGFFIL), 219 to 239 (LVMWICAMGTVLNTIASLIMV), 255 to 275 (AAVYSGVVCSGMAYYIQSIVI), 281 to 301 (VFTTSFSPMCMIITAFLGVLV), and 306 to 326 (IHLGSIIGAIFIVFGLYSVVW). EamA domains are found at residues 23–151 (AGMY…AMVM) and 198–325 (TWAG…YSVV).

The protein belongs to the drug/metabolite transporter (DMT) superfamily. Plant drug/metabolite exporter (P-DME) (TC 2.A.7.4) family.

The protein resides in the membrane. This is WAT1-related protein At4g08300 from Arabidopsis thaliana (Mouse-ear cress).